Reading from the N-terminus, the 308-residue chain is Acetyl-coenzyme A carboxylase carboxyl transferase subunit beta 1 (308 aa).

Residues 25 to 294 (VWTKCTSCEQ…PMVVSVNESP (270 aa)) enclose the CoA carboxyltransferase N-terminal domain. Zn(2+) contacts are provided by Cys29, Cys32, Cys48, and Cys51. The segment at 29–51 (CTSCEQVLYHAELERNLEVCPKC) adopts a C4-type zinc-finger fold. Residues 289-308 (SVNESPNEEPYSVPEADEKG) form a disordered region.

It belongs to the AccD/PCCB family. In terms of assembly, acetyl-CoA carboxylase is a heterohexamer composed of biotin carboxyl carrier protein (AccB), biotin carboxylase (AccC) and two subunits each of ACCase subunit alpha (AccA) and ACCase subunit beta (AccD). Zn(2+) serves as cofactor.

Its subcellular location is the cytoplasm. The catalysed reaction is N(6)-carboxybiotinyl-L-lysyl-[protein] + acetyl-CoA = N(6)-biotinyl-L-lysyl-[protein] + malonyl-CoA. It participates in lipid metabolism; malonyl-CoA biosynthesis; malonyl-CoA from acetyl-CoA: step 1/1. Component of the acetyl coenzyme A carboxylase (ACC) complex. Biotin carboxylase (BC) catalyzes the carboxylation of biotin on its carrier protein (BCCP) and then the CO(2) group is transferred by the transcarboxylase to acetyl-CoA to form malonyl-CoA. The chain is Acetyl-coenzyme A carboxylase carboxyl transferase subunit beta 1 from Vibrio campbellii (strain ATCC BAA-1116).